The following is a 200-amino-acid chain: ATP synthase subunit s, mitochondrial (200 aa).

The transit peptide at 1–25 directs the protein to the mitochondrion; sequence MMMFGKISRQLFSLKKIPWSCDSRY. Residues 1 to 61 are N-terminal domain; that stretch reads MMMFGKISRQ…SEWLLRCGAK (61 aa). Gly59 is a Mg(2+) binding site. LRR repeat units follow at residues 62–87, 88–116, 117–141, and 142–173; these read VRYCGHQKWLQDYNKLPGGSVDRYKI, QAIDATDSCIMDIGFDHLVGLEHVERITL, CRCHYIEDNCLQRLSQLENLRKSLL, and ELEIIACGNVTDNGVIALRHFKNLKYLFLSDL. Thr93 is a binding site for Mg(2+).

Belongs to the ATP synthase subunit s family. In terms of assembly, homotetramer. Associates with ATP synthase.

Its subcellular location is the mitochondrion. It localises to the mitochondrion inner membrane. In terms of biological role, involved in regulation of mitochondrial membrane ATP synthase. Necessary for H(+) conduction of ATP synthase. Facilitates energy-driven catalysis of ATP synthesis by blocking a proton leak through an alternative proton exit pathway. The chain is ATP synthase subunit s, mitochondrial from Rattus norvegicus (Rat).